The chain runs to 387 residues: Formate-dependent phosphoribosylglycinamide formyltransferase (387 aa).

N(1)-(5-phospho-beta-D-ribosyl)glycinamide-binding positions include 12 to 13 and E72; that span reads EL. Residues R104, K145, 150 to 155, 185 to 188, and E193 each bind ATP; these read SSGKGQ and EEFI. The ATP-grasp domain occupies 109–300; sequence DLAARELGLA…EFELHLRAVL (192 aa). 2 residues coordinate Mg(2+): E258 and E270. N(1)-(5-phospho-beta-D-ribosyl)glycinamide-binding positions include D277, K347, and 354 to 355; that span reads RR.

This sequence belongs to the PurK/PurT family. In terms of assembly, homodimer.

It carries out the reaction N(1)-(5-phospho-beta-D-ribosyl)glycinamide + formate + ATP = N(2)-formyl-N(1)-(5-phospho-beta-D-ribosyl)glycinamide + ADP + phosphate + H(+). Its pathway is purine metabolism; IMP biosynthesis via de novo pathway; N(2)-formyl-N(1)-(5-phospho-D-ribosyl)glycinamide from N(1)-(5-phospho-D-ribosyl)glycinamide (formate route): step 1/1. Its function is as follows. Involved in the de novo purine biosynthesis. Catalyzes the transfer of formate to 5-phospho-ribosyl-glycinamide (GAR), producing 5-phospho-ribosyl-N-formylglycinamide (FGAR). Formate is provided by PurU via hydrolysis of 10-formyl-tetrahydrofolate. This Anaeromyxobacter dehalogenans (strain 2CP-C) protein is Formate-dependent phosphoribosylglycinamide formyltransferase.